An 81-amino-acid chain; its full sequence is Short neurotoxin 1 (81 aa).

The signal sequence occupies residues 1 to 21 (MKTLLLTLVVVTIVCLDLGYT). 4 disulfide bridges follow: Cys-24–Cys-43, Cys-38–Cys-60, Cys-62–Cys-73, and Cys-74–Cys-79.

Belongs to the three-finger toxin family. Short-chain subfamily. Type I alpha-neurotoxin sub-subfamily. In terms of tissue distribution, expressed by the venom gland.

The protein resides in the secreted. In terms of biological role, binds to muscle nicotinic acetylcholine receptor (nAChR) and inhibit acetylcholine from binding to the receptor, thereby impairing neuromuscular transmission. This chain is Short neurotoxin 1, found in Austrelaps superbus (Lowland copperhead snake).